The following is a 360-amino-acid chain: Phospho-N-acetylmuramoyl-pentapeptide-transferase (360 aa).

The next 10 membrane-spanning stretches (helical) occupy residues 21–41 (YITFRAIMALLTAMGIGLWIG), 73–93 (TMGGIMILIAIGVSTLLWADL), 98–118 (IWFVLFVLFGYGAVGFVDDYW), 132–152 (WKYFWLSVIALIAVFGIYAVG), 168–188 (VMPQLGIFFIILSYFVIVGTS), 199–219 (GLAIVPTIMVASAFALIAWAT), 236–256 (AGELVILCTAIVGAGLGFLWY), 263–283 (VFMGDVGSLSLGGALGTIAVL), 288–308 (LLLVIMGGVFVVEALSVILQV), and 338–358 (VIVRFWIITLMLVLIGLVTLK).

The protein belongs to the glycosyltransferase 4 family. MraY subfamily. Requires Mg(2+) as cofactor.

The protein localises to the cell inner membrane. The catalysed reaction is UDP-N-acetyl-alpha-D-muramoyl-L-alanyl-gamma-D-glutamyl-meso-2,6-diaminopimeloyl-D-alanyl-D-alanine + di-trans,octa-cis-undecaprenyl phosphate = di-trans,octa-cis-undecaprenyl diphospho-N-acetyl-alpha-D-muramoyl-L-alanyl-D-glutamyl-meso-2,6-diaminopimeloyl-D-alanyl-D-alanine + UMP. The protein operates within cell wall biogenesis; peptidoglycan biosynthesis. Catalyzes the initial step of the lipid cycle reactions in the biosynthesis of the cell wall peptidoglycan: transfers peptidoglycan precursor phospho-MurNAc-pentapeptide from UDP-MurNAc-pentapeptide onto the lipid carrier undecaprenyl phosphate, yielding undecaprenyl-pyrophosphoryl-MurNAc-pentapeptide, known as lipid I. The chain is Phospho-N-acetylmuramoyl-pentapeptide-transferase from Actinobacillus pleuropneumoniae serotype 5b (strain L20).